Reading from the N-terminus, the 73-residue chain is Gas vesicle protein A (73 aa).

This sequence belongs to the gas vesicle GvpA family. In terms of assembly, the gas vesicle shell is 2 nm thick and consists of a single layer of this protein. It forms helical ribs nearly perpendicular to the long axis of the vesicle.

Its subcellular location is the gas vesicle shell. In terms of biological role, gas vesicles are hollow, gas filled proteinaceous nanostructures found in some microorganisms. During planktonic growth they allow positioning of the organism at a favorable depth for light or nutrient acquisition. GvpA forms the protein shell. The chain is Gas vesicle protein A from Nostoc punctiforme (strain ATCC 29133 / PCC 73102).